We begin with the raw amino-acid sequence, 463 residues long: MKSFDEMTPKEIVQELDKYIVGQYEAKKAVAIAVRNRIRRQKLPEEWRKEVLPKNILMIGPTGVGKTEIARRLAQLSGSPFLKVEATRFTEVGYVGKNVDSMIRDLVEISVNMVKQEKIKEVERQAEELVEERILDALVPESKAVPVVTNPFINLITGGQQQQYTPEDRRRFRAKREEMREKLRKGELENEEIEIELEETVSPFMGIFGPGMEDLGIEITNMFSGMLPKQKKKRKMKVSEARKVLLPLEAEKLIDMDKVVQEALDRAQNRGIIFIDEIDKIAGKESAVGPDVSRQGVQRDLLPIVEGTTIMTKYGPVRTDYILFIAAGAFHVSRPSDLIPELQGRFPIRVELSPLTEEDFVRILKEPENAIIKQYQALLSTEGVELVFTEDGIREMARIAYQLNQRLENIGARRLYTVAEKVLEEISFEAPDIPEKRVVVDAEYVRRRLEKIVQDEDLSAYIL.

ATP is bound by residues Val-21, Gly-63–Glu-68, Asp-276, Glu-341, and Arg-413.

This sequence belongs to the ClpX chaperone family. HslU subfamily. A double ring-shaped homohexamer of HslV is capped on each side by a ring-shaped HslU homohexamer. The assembly of the HslU/HslV complex is dependent on binding of ATP.

It localises to the cytoplasm. Its function is as follows. ATPase subunit of a proteasome-like degradation complex; this subunit has chaperone activity. The binding of ATP and its subsequent hydrolysis by HslU are essential for unfolding of protein substrates subsequently hydrolyzed by HslV. HslU recognizes the N-terminal part of its protein substrates and unfolds these before they are guided to HslV for hydrolysis. The protein is ATP-dependent protease ATPase subunit HslU of Thermotoga petrophila (strain ATCC BAA-488 / DSM 13995 / JCM 10881 / RKU-1).